The sequence spans 205 residues: Thiamine-phosphate synthase (205 aa).

Residues 37–41 and asparagine 69 each bind 4-amino-2-methyl-5-(diphosphooxymethyl)pyrimidine; that span reads QVREK. Mg(2+)-binding residues include aspartate 70 and aspartate 89. Residue serine 108 coordinates 4-amino-2-methyl-5-(diphosphooxymethyl)pyrimidine. 134–136 serves as a coordination point for 2-[(2R,5Z)-2-carboxy-4-methylthiazol-5(2H)-ylidene]ethyl phosphate; the sequence is TGS. 4-amino-2-methyl-5-(diphosphooxymethyl)pyrimidine is bound at residue lysine 137. 2-[(2R,5Z)-2-carboxy-4-methylthiazol-5(2H)-ylidene]ethyl phosphate is bound by residues glycine 165 and 185 to 186; that span reads IS.

It belongs to the thiamine-phosphate synthase family. The cofactor is Mg(2+).

It carries out the reaction 2-[(2R,5Z)-2-carboxy-4-methylthiazol-5(2H)-ylidene]ethyl phosphate + 4-amino-2-methyl-5-(diphosphooxymethyl)pyrimidine + 2 H(+) = thiamine phosphate + CO2 + diphosphate. It catalyses the reaction 2-(2-carboxy-4-methylthiazol-5-yl)ethyl phosphate + 4-amino-2-methyl-5-(diphosphooxymethyl)pyrimidine + 2 H(+) = thiamine phosphate + CO2 + diphosphate. The catalysed reaction is 4-methyl-5-(2-phosphooxyethyl)-thiazole + 4-amino-2-methyl-5-(diphosphooxymethyl)pyrimidine + H(+) = thiamine phosphate + diphosphate. The protein operates within cofactor biosynthesis; thiamine diphosphate biosynthesis; thiamine phosphate from 4-amino-2-methyl-5-diphosphomethylpyrimidine and 4-methyl-5-(2-phosphoethyl)-thiazole: step 1/1. Its function is as follows. Condenses 4-methyl-5-(beta-hydroxyethyl)thiazole monophosphate (THZ-P) and 2-methyl-4-amino-5-hydroxymethyl pyrimidine pyrophosphate (HMP-PP) to form thiamine monophosphate (TMP). This is Thiamine-phosphate synthase from Clostridium botulinum (strain 657 / Type Ba4).